Here is a 274-residue protein sequence, read N- to C-terminus: MKVIMTTKVDKASMNIMNKLIENFGFKETEYVFDGNPVYKRGDVLILTTNDEMIYYDYLDREIENQLGFKPEIIAFASRHSSKQKLPALTTHVTGNWGKAMYGGKDESFAVAIPSAMKLSLLKMSELNDLGWTVCYEATHHGPTELEVPSFFIEIGSSEEEWINDRAGEIIAETIIYVLDNYEKGRSKFKVALGIGGGHYAPKQTKRALEGDLAFGHILPKYAQPVSRDVMIKALNRFGEKVEAIYVDWKGSRGETRQLAKSLAQELGLEFIKD.

Belongs to the DtdA deacylase family. In terms of assembly, monomer. The cofactor is Zn(2+).

The enzyme catalyses a D-aminoacyl-tRNA + H2O = a tRNA + a D-alpha-amino acid + H(+). The catalysed reaction is glycyl-tRNA(Ala) + H2O = tRNA(Ala) + glycine + H(+). D-aminoacyl-tRNA deacylase with broad substrate specificity. By recycling D-aminoacyl-tRNA to D-amino acids and free tRNA molecules, this enzyme counteracts the toxicity associated with the formation of D-aminoacyl-tRNA entities in vivo. The polypeptide is D-aminoacyl-tRNA deacylase (Pyrococcus horikoshii (strain ATCC 700860 / DSM 12428 / JCM 9974 / NBRC 100139 / OT-3)).